The following is a 122-amino-acid chain: Biogenesis of lysosome-related organelles complex 1 subunit CNL1 (122 aa).

Over residues 1–10 (MQDNSSHSRE) the composition is skewed to basic and acidic residues. The interval 1–21 (MQDNSSHSRESASAGDDPLGI) is disordered. The stretch at 63 to 95 (ENTIDKNIAKFKELLEKCDTLENHYEMLNQLAI) forms a coiled coil.

The protein belongs to the BLOC1S4 family. In terms of assembly, component of the biogenesis of lysosome-related organelles complex-1 (BLOC-1) composed of at least BLI1, BLS1, CNL1, KXD1, SNN1 and VAB2.

It localises to the cytoplasm. Component of the biogenesis of lysosome-related organelles complex-1 (BLOC-1), a complex that is involved in endosomal cargo sorting. The protein is Biogenesis of lysosome-related organelles complex 1 subunit CNL1 (CLN1) of Saccharomyces cerevisiae (strain RM11-1a) (Baker's yeast).